The following is a 129-amino-acid chain: Large ribosomal subunit protein bL12c (129 aa).

Belongs to the bacterial ribosomal protein bL12 family. In terms of assembly, homodimer. Part of the ribosomal stalk of the 50S ribosomal subunit. Forms a multimeric L10(L12)X complex, where L10 forms an elongated spine to which 2 to 4 L12 dimers bind in a sequential fashion. Binds GTP-bound translation factors.

The protein localises to the plastid. It localises to the chloroplast. Functionally, forms part of the ribosomal stalk which helps the ribosome interact with GTP-bound translation factors. Is thus essential for accurate translation. This Oltmannsiellopsis viridis (Marine flagellate) protein is Large ribosomal subunit protein bL12c.